Reading from the N-terminus, the 278-residue chain is Ribosomal RNA small subunit methyltransferase A (278 aa).

Positions 28, 30, 55, 77, 103, and 122 each coordinate S-adenosyl-L-methionine.

This sequence belongs to the class I-like SAM-binding methyltransferase superfamily. rRNA adenine N(6)-methyltransferase family. RsmA subfamily.

It is found in the cytoplasm. The catalysed reaction is adenosine(1518)/adenosine(1519) in 16S rRNA + 4 S-adenosyl-L-methionine = N(6)-dimethyladenosine(1518)/N(6)-dimethyladenosine(1519) in 16S rRNA + 4 S-adenosyl-L-homocysteine + 4 H(+). In terms of biological role, specifically dimethylates two adjacent adenosines (A1518 and A1519) in the loop of a conserved hairpin near the 3'-end of 16S rRNA in the 30S particle. May play a critical role in biogenesis of 30S subunits. In Cereibacter sphaeroides (strain ATCC 17025 / ATH 2.4.3) (Rhodobacter sphaeroides), this protein is Ribosomal RNA small subunit methyltransferase A.